The following is a 401-amino-acid chain: Argininosuccinate synthase (401 aa).

Residues 8–16 (AYSGGLDTS) and alanine 35 each bind ATP. 2 residues coordinate L-citrulline: tyrosine 86 and serine 91. An ATP-binding site is contributed by glycine 116. Residues threonine 118, asparagine 122, and aspartate 123 each contribute to the L-aspartate site. Asparagine 122 lines the L-citrulline pocket. 5 residues coordinate L-citrulline: arginine 126, serine 175, serine 184, glutamate 260, and tyrosine 272.

Belongs to the argininosuccinate synthase family. Type 1 subfamily. In terms of assembly, homotetramer.

The protein resides in the cytoplasm. The enzyme catalyses L-citrulline + L-aspartate + ATP = 2-(N(omega)-L-arginino)succinate + AMP + diphosphate + H(+). The protein operates within amino-acid biosynthesis; L-arginine biosynthesis; L-arginine from L-ornithine and carbamoyl phosphate: step 2/3. The protein is Argininosuccinate synthase of Carboxydothermus hydrogenoformans (strain ATCC BAA-161 / DSM 6008 / Z-2901).